A 129-amino-acid polypeptide reads, in one-letter code: Small ribosomal subunit protein eS6 (129 aa).

Belongs to the eukaryotic ribosomal protein eS6 family.

The polypeptide is Small ribosomal subunit protein eS6 (Methanocorpusculum labreanum (strain ATCC 43576 / DSM 4855 / Z)).